The following is a 434-amino-acid chain: Eukaryotic translation initiation factor 3 subunit E (434 aa).

The 174-residue stretch at 219-392 (FFNHPKGRDL…GHVVMGTQPL (174 aa)) folds into the PCI domain.

Belongs to the eIF-3 subunit E family. In terms of assembly, component of the eukaryotic translation initiation factor 3 (eIF-3) complex. The eIF-3 complex interacts with pix. Interacts with mxt.

Its subcellular location is the cytoplasm. In terms of biological role, component of the eukaryotic translation initiation factor 3 (eIF-3) complex, which is involved in protein synthesis of a specialized repertoire of mRNAs and, together with other initiation factors, stimulates binding of mRNA and methionyl-tRNAi to the 40S ribosome. The eIF-3 complex specifically targets and initiates translation of a subset of mRNAs involved in cell proliferation. The chain is Eukaryotic translation initiation factor 3 subunit E (eIF3-S6) from Drosophila ananassae (Fruit fly).